A 516-amino-acid polypeptide reads, in one-letter code: Maturase K (516 aa).

This sequence belongs to the intron maturase 2 family. MatK subfamily.

It localises to the plastid. The protein localises to the chloroplast. Its function is as follows. Usually encoded in the trnK tRNA gene intron. Probably assists in splicing its own and other chloroplast group II introns. In Galanthus nivalis (Common snowdrop), this protein is Maturase K.